The chain runs to 383 residues: MTIETTTKKRPRAARPPRPRESDAYLETVAGLLDVRDKTGYIRTHGYLPGVDDVRVPHAQIRQYGLRPGDHVVATTRKPYERLAEVESVNGSTDWRNRPDFADMTPIHPRERLRLETESVTSRVIDLFAPIGKGQRGLIVAPPKAGKTMVLQDLAAAITRNHPDCHLMVVLVGERPEEVTEMRESIHGEVAASTFDRPDRDHTALAELAVERAKRLAESGHDVVVLLDSLTRLGRAYNNLAPGGGRTLAGGLDAAALLPPRRFFGAARNLRDGGSLTILATALVETGSRMDDNLFEEFKGTGNMELRLSRALADKRLYPAVDLDASGTRREEILLDPQEHQLTWRLRRTLGGLEKQQALELLTDRLRETPSNAAFLQQVRQTT.

Positions 1–22 are disordered; sequence MTIETTTKKRPRAARPPRPRES. Basic residues predominate over residues 8 to 17; that stretch reads KKRPRAARPP. Positions 26 to 93 constitute a Rho RNA-BD domain; it reads LETVAGLLDV…AEVESVNGST (68 aa). Residues 132–137, 144–149, and Arg-175 each bind ATP; these read GKGQRG and KAGKTM.

It belongs to the Rho family. Homohexamer. The homohexamer assembles into an open ring structure.

Its function is as follows. Facilitates transcription termination by a mechanism that involves Rho binding to the nascent RNA, activation of Rho's RNA-dependent ATPase activity, and release of the mRNA from the DNA template. This is Transcription termination factor Rho from Streptosporangium roseum (strain ATCC 12428 / DSM 43021 / JCM 3005 / KCTC 9067 / NCIMB 10171 / NRRL 2505 / NI 9100).